Reading from the N-terminus, the 1292-residue chain is Putative late blight resistance protein homolog R1C-3 (1292 aa).

Coiled-coil stretches lie at residues 394–414 and 505–526; these read DSLA…ESMQ and RMNE…KLLN. An NB-ARC domain is found at 505 to 792; that stretch reads RMNEEIVGFE…SESFVKSCEG (288 aa). 538–545 contributes to the ATP binding site; that stretch reads GMPGLGKT. LRR repeat units lie at residues 842–865, 920–944, 963–991, 1066–1089, 1094–1113, 1114–1142, and 1163–1187; these read AEEN…VYSH, FKFL…LFYL, LWNL…VWDM, PIRL…CISA, YLEL…TADH, LKHL…MFPQ, and FPNL…FMDI. Residues 1211–1278 enclose the HMA domain; sequence ETQVEDNQNT…KLRNVAYADE (68 aa).

The protein belongs to the disease resistance NB-LRR family.

It localises to the cytoplasm. The protein localises to the membrane. Confers resistance to late blight (Phytophthora infestans) races carrying the avirulence gene Avr1. Resistance proteins guard the plant against pathogens that contain an appropriate avirulence protein via an indirect interaction with this avirulence protein. That triggers a defense system including the hypersensitive response, which restricts the pathogen growth. In Solanum demissum (Wild potato), this protein is Putative late blight resistance protein homolog R1C-3 (R1C-3).